Consider the following 291-residue polypeptide: Protein SpdB (291 aa).

Helical transmembrane passes span Val-24–Gly-44, Ile-71–Leu-91, and Trp-99–Trp-119.

It is found in the cell membrane. Involved in plasmid transfer. The protein is Protein SpdB (spdB) of Streptomyces lividans.